The following is a 699-amino-acid chain: Elongation factor G 1 (699 aa).

In terms of domain architecture, tr-type G spans 8-290; it reads ERYRNIGICA…AVIEYLPSPI (283 aa). Residues 17–24, 88–92, and 142–145 each bind GTP; these read AHVDAGKT, DTPGH, and NKMD.

Belongs to the TRAFAC class translation factor GTPase superfamily. Classic translation factor GTPase family. EF-G/EF-2 subfamily.

The protein localises to the cytoplasm. Functionally, catalyzes the GTP-dependent ribosomal translocation step during translation elongation. During this step, the ribosome changes from the pre-translocational (PRE) to the post-translocational (POST) state as the newly formed A-site-bound peptidyl-tRNA and P-site-bound deacylated tRNA move to the P and E sites, respectively. Catalyzes the coordinated movement of the two tRNA molecules, the mRNA and conformational changes in the ribosome. In Vibrio vulnificus (strain YJ016), this protein is Elongation factor G 1.